We begin with the raw amino-acid sequence, 358 residues long: MSRLKNDTFLRALLRQPTEYTPVWLMRQAGRYLPEYCETRKRAGSFLNLCKSPALACEVTLQPLARYDLDAAILFSDILTVPDAMGLGLYFAEGEGPRFERPLRDEWEIRNLSVPDPHAELQYVMDAVSEIRRALDGSVPLIGFSGSPWTLACYMVEGGSSDDYRRIKTMAYSRPDLLHHILGVTADAVVQYLNAQIEAGAQAVMVFDSWGGVLAEAAYREFSLRYLQRVVDGLIREREGQRVPSIVFTKGGGIWLESIAAIGSDAVGLDWTMDIGRARALVGQRVALQGNLDPSILFAPPEAVAAEARRVLDAYGPHPGHVFNLGHGISQFTPPENVSVLVDTVHDHSRKLRAAVGG.

Substrate contacts are provided by residues Arg27–Arg31, Asp77, Tyr154, Ser209, and His327.

It belongs to the uroporphyrinogen decarboxylase family. Homodimer.

The protein resides in the cytoplasm. The enzyme catalyses uroporphyrinogen III + 4 H(+) = coproporphyrinogen III + 4 CO2. It functions in the pathway porphyrin-containing compound metabolism; protoporphyrin-IX biosynthesis; coproporphyrinogen-III from 5-aminolevulinate: step 4/4. Its function is as follows. Catalyzes the decarboxylation of four acetate groups of uroporphyrinogen-III to yield coproporphyrinogen-III. The protein is Uroporphyrinogen decarboxylase of Azoarcus sp. (strain BH72).